The chain runs to 1253 residues: Guanine nucleotide exchange factor SDC25 (1253 aa).

The SH3 domain maps to 26 to 98 (QPIDVVECTY…PPSFTRSILN (73 aa)). The segment at 624–649 (LNLDNAKDKKNGSQNTDIQEEEDEYE) is disordered. The region spanning 782–914 (GPIVRIKGGS…ELLKEVNQKF (133 aa)) is the N-terminal Ras-GEF domain. A Ras-GEF domain is found at 952-1199 (VDPVLFATQL…QYQLSLIIEP (248 aa)). Residues 1202-1253 (RKKVVPNSNSNNKSQEKSRDDQTDEGKTSTKKDRFPKFQLHKTKKKAPKVSK) form a disordered region. Basic and acidic residues predominate over residues 1215–1237 (SQEKSRDDQTDEGKTSTKKDRFP). The span at 1240-1253 (QLHKTKKKAPKVSK) shows a compositional bias: basic residues.

Promotes the exchange of Ras-bound GDP by GTP. The sequence is that of Guanine nucleotide exchange factor SDC25 (SDC25) from Saccharomyces cerevisiae (Baker's yeast).